The following is a 2513-amino-acid chain: Polyprotein P1234 (2513 aa).

One can recognise an Alphavirus-like MT domain in the interval 30 to 260; that stretch reads VAQQVTPNDH…EHRASLQSWH (231 aa). A nsP1 membrane-binding region spans residues 245 to 264; sequence GSTLYPEHRASLQSWHLPSV. Residue C420 is the site of S-palmitoyl cysteine; by host attachment. A (+)RNA virus helicase ATP-binding domain is found at 695-850; sequence ELTNPPYHEL…KDICTKTFYK (156 aa). Residue 726–733 participates in a ribonucleoside 5'-triphosphate binding; it reads GTPGSGKS. The 149-residue stretch at 851 to 999 folds into the (+)RNA virus helicase C-terminal domain; sequence YISRRCTQPV…IEDWEAEHKG (149 aa). Positions 1012 to 1341 constitute a Peptidase C9 domain; sequence NPFSCKTNVC…CVISSVYEGT (330 aa). The interval 1013–1032 is nucleolus localization signal; that stretch reads PFSCKTNVCWAKALEPILAT. Catalysis depends on C1021, which acts as the For cysteine protease nsP2 activity. Positions 1066 to 1075 match the Nuclear export signal motif; the sequence is IKFFGMDLTS. Catalysis depends on H1098, which acts as the For cysteine protease nsP2 activity. The short motif at 1196 to 1200 is the Nuclear localization signal element; it reads PRKRI. Positions 1348–1507 constitute a Macro domain; the sequence is APSYRTKREN…RIDAALQLKE (160 aa). ADP-D-ribose-binding residues include N1371, G1379, G1459, I1460, and Y1461. C1610, C1612, C1635, and C1653 together coordinate Zn(2+). Residues 1679–1696 are compositionally biased toward low complexity; the sequence is PTAPPAQAEEAPEVVATP. A disordered region spans residues 1679 to 1705; sequence PTAPPAQAEEAPEVVATPSPSTADNTS. 2 consecutive short sequence motifs (FGDF; binding to host G3BP1) follow at residues 1837–1840 and 1860–1863; these read FGSF. Residues 2267 to 2382 enclose the RdRp catalytic domain; that stretch reads DPVLETDIAS…HGVVSDKEMA (116 aa).

Interacts with non-structural protein 3. Interacts with RNA-directed RNA polymerase nsP4. Interacts with protease nsP2. interacts with itself. Interacts with host TMEM45B; this interaction leads to viral replication inhibition. In terms of assembly, interacts with mRNA-capping enzyme nsP1. Interacts with host DDX1. Interacts with host DDX3. Interacts (via C-terminus) with host G3BP1; this interaction inhibits the formation of host stress granules on viral mRNAs and the nsp3-G3BP1 complexes bind viral RNAs and probably orchestrate the assembly of viral replication complexes. Interacts (via C-terminus) with host G3BP2; this interaction inhibits the formation of host stress granules on viral mRNAs and the nsp3-G3BP2 complexes bind viral RNAs and probably orchestrate the assembly of viral replication complexes. As to quaternary structure, interacts with mRNA-capping enzyme nsP1. Interacts with protease nsP2. interacts with itself. Interacts with host TMEM45B; this interaction leads to viral replication inhibition. Interacts with RNA-directed RNA polymerase nsP4. Interacts with mRNA-capping enzyme nsP1. Interacts with KPNA1/karyopherin-alpha1; this interaction probably allows the active transport of protease nsP2 into the host nucleus. The cofactor is Mg(2+). Mn(2+) is required as a cofactor. Specific enzymatic cleavages in vivo yield mature proteins. The processing of the polyprotein is temporally regulated. In early stages (1.7 hpi), P1234 is first cleaved in trans through its nsP2 protease activity, releasing P123' and nsP4, which associate to form the early replication complex. At the same time, P1234 is also cut at the nsP1/nsP2 site early in infection but with lower efficiency. After replication of the viral minus-strand RNAs (4 hpi), the polyproteins are cut at the nsP1/nsP2 and nsP2/nsP3 sites very efficiently, preventing accumulation of P123' and P1234 and allowing the formation of the late replication complex. NsP3'/nsP4 site is not cleaved anymore and P34 is produced rather than nsP4. Post-translationally, specific enzymatic cleavages in vivo yield mature proteins. The processing of the polyprotein is temporally regulated. In early stages (1.7 hpi), P123 is cleaved at the nsP1/nsP2 site with low efficiency. After replication of the viral minus-strand RNAs (4 hpi), the polyproteins are cut at the nsP1/nsP2 and nsP2/nsP3 sites very efficiently, preventing accumulation of P123 and allowing the formation of the late replication complex. In terms of processing, specific enzymatic cleavages in vivo yield mature proteins. The processing of the polyprotein is temporally regulated. In early stages (1.7 hpi), P123' is cleaved at the nsP1/nsP2 site with low efficiency. After replication of the viral minus-strand RNAs (4 hpi), the polyproteins are cut at the nsP1/nsP2 and nsP2/nsP3 sites very efficiently, preventing accumulation of P123' and allowing the formation of the late replication complex. Palmitoylated by host palmitoyltransferases ZDHHC2 and ZDHHC19. Post-translationally, phosphorylated by host on serines and threonines. In terms of processing, ubiquitinated; targets the protein for rapid degradation via the ubiquitin system. Nsp4 is present in extremely low quantities due to low frequency of translation through the amber stop-codon and the degradation by the ubiquitin pathway.

It is found in the host cytoplasmic vesicle membrane. The protein resides in the host cell membrane. Its subcellular location is the host cell projection. It localises to the host filopodium. The protein localises to the host nucleus. It is found in the host cytoplasm. The catalysed reaction is GTP + S-adenosyl-L-methionine = N(7)-methyl-GTP + S-adenosyl-L-homocysteine. It catalyses the reaction N(7)-methyl-GTP + L-histidyl-[protein] = N(tele)-(N(7)-methylguanosine 5'-phospho)-L-histidyl-[protein] + diphosphate. It carries out the reaction N(tele)-(N(7)-methylguanosine 5'-phospho)-L-histidyl-[protein] + a 5'-end diphospho-(purine-ribonucleoside) in mRNA + H(+) = a 5'-end (N(7)-methyl 5'-triphosphoguanosine)-(purine-ribonucleoside) in mRNA + L-histidyl-[protein]. The enzyme catalyses a 5'-end triphospho-ribonucleoside in mRNA + H2O = a 5'-end diphospho-ribonucleoside in mRNA + phosphate + H(+). The catalysed reaction is a ribonucleoside 5'-triphosphate + H2O = a ribonucleoside 5'-diphosphate + phosphate + H(+). It catalyses the reaction ATP + H2O = ADP + phosphate + H(+). It carries out the reaction RNA(n) + a ribonucleoside 5'-triphosphate = RNA(n+1) + diphosphate. The enzyme catalyses RNA(n) + ATP = RNA(n)-3'-adenine ribonucleotide + diphosphate. The catalysed reaction is 4-O-(ADP-D-ribosyl)-L-aspartyl-[protein] + H2O = L-aspartyl-[protein] + ADP-D-ribose + H(+). It catalyses the reaction 5-O-(ADP-D-ribosyl)-L-glutamyl-[protein] + H2O = L-glutamyl-[protein] + ADP-D-ribose + H(+). It carries out the reaction ADP-alpha-D-ribose 1''-phosphate + H2O = ADP-D-ribose + phosphate. Functionally, inactive precursor of the viral replicase, which is activated by cleavages carried out by the viral protease nsP2. Its function is as follows. The early replication complex formed by the polyprotein P123 and nsP4 synthesizes minus-strand RNAs. Polyprotein P123 is a short-lived polyprotein that accumulates during early stage of infection. As soon P123 is cleaved into mature proteins, the plus-strand RNAs synthesis begins. In terms of biological role, the early replication complex formed by the polyprotein P123' and nsP4 synthesizes minus-strand RNAs. Polyprotein P123' is a short-lived polyprotein that accumulates during early stage of infection. As soon P123' is cleaved into mature proteins, the plus-strand RNAs synthesis begins. Cytoplasmic capping enzyme that catalyzes two virus-specific reactions: methyltransferase and nsP1 guanylyltransferase. mRNA-capping is necessary since all viral RNAs are synthesized in the cytoplasm, and host capping enzymes are restricted to the nucleus. The enzymatic reaction involves a covalent link between 7-methyl-GMP and nsP1, whereas eukaryotic capping enzymes form a covalent complex only with GMP. nsP1 capping consists in the following reactions: GTP is first methylated into 7-methyl-GMP and then is covalently linked to nsP1 to form the m7GMp-nsP1 complex from which 7-methyl-GMP complex is transferred to the mRNA to create the cap structure. NsP1 is needed for the initiation of the minus-strand RNAs synthesis. Probably serves as a membrane anchor for the replication complex composed of nsP1-nsP4. Palmitoylated nsP1 is remodeling host cell cytoskeleton, and induces filopodium-like structure formation at the surface of the host cell. Functionally, multifunctional protein whose N-terminus is part of the RNA polymerase complex and displays NTPase, RNA triphosphatase and helicase activities. NTPase and RNA triphosphatase are involved in viral RNA capping and helicase keeps a check on the dsRNA replication intermediates. The C-terminus harbors a protease that specifically cleaves the polyproteins and releases the mature proteins. Required for the shutoff of minus-strand RNAs synthesis. Specifically inhibits the host IFN response by promoting the nuclear export of host STAT1. Also inhibits host transcription by inducing rapid proteasome-dependent degradation of POLR2A, a catalytic subunit of the RNAPII complex. The resulting inhibition of cellular protein synthesis serves to ensure maximal viral gene expression and to evade host immune response. Its function is as follows. Seems to be essential for minus-strand RNAs and subgenomic 26S mRNAs synthesis. Displays mono-ADP-ribosylhydrolase activity. ADP-ribosylation is a post-translantional modification that controls various processes of the host cell and the virus probably needs to revert it for optimal viral replication. Binds proteins of G3BP family and sequesters them into the viral RNA replication complexes thereby inhibiting the formation of host stress granules on viral mRNAs. The nsp3-G3BP complexes bind viral RNAs and probably orchestrate the assembly of viral replication complexes, thanks to the ability of G3BP family members to self-assemble and bind DNA. In terms of biological role, seems to be essential for minus-strand RNAs and subgenomic 26S mRNAs synthesis. Displays mono-ADP-ribosylhydrolase activity. ADP-ribosylation is a post-translational modification that controls various processes of the host cell and the virus probably needs to revert it for optimal viral replication. Binds proteins of G3BP family and sequesters them into the viral RNA replication complexes thereby inhibiting the formation of host stress granules on viral mRNAs. The nsp3'-G3BP complexes bind viral RNAs and probably orchestrate the assembly of viral replication complexes, thanks to the ability of G3BP family members to self-assemble and bind DNA. RNA dependent RNA polymerase. Replicates genomic and antigenomic RNA by recognizing replications specific signals. The early replication complex formed by the polyprotein P123 and nsP4 synthesizes minus-strand RNAs. The late replication complex composed of fully processed nsP1-nsP4 is responsible for the production of genomic and subgenomic plus-strand RNAs. The core catalytic domain of nsP4 also possesses terminal adenylyltransferase (TATase) activity that is probably involved in maintenance and repair of the poly(A) tail, an element required for replication of the viral genome. In Acrocephalus scirpaceus (Eurasian reed-warbler), this protein is Polyprotein P1234.